We begin with the raw amino-acid sequence, 275 residues long: NH(3)-dependent NAD(+) synthetase (275 aa).

ATP is bound at residue G46–S53. A Mg(2+)-binding site is contributed by D52. R140 is a binding site for deamido-NAD(+). Residue T160 coordinates ATP. A Mg(2+)-binding site is contributed by E165. Positions 173 and 180 each coordinate deamido-NAD(+). ATP contacts are provided by K189 and T211. H260 to K261 provides a ligand contact to deamido-NAD(+).

It belongs to the NAD synthetase family. In terms of assembly, homodimer.

It catalyses the reaction deamido-NAD(+) + NH4(+) + ATP = AMP + diphosphate + NAD(+) + H(+). It functions in the pathway cofactor biosynthesis; NAD(+) biosynthesis; NAD(+) from deamido-NAD(+) (ammonia route): step 1/1. Catalyzes the ATP-dependent amidation of deamido-NAD to form NAD. Uses ammonia as a nitrogen source. This is NH(3)-dependent NAD(+) synthetase from Enterobacter sp. (strain 638).